We begin with the raw amino-acid sequence, 336 residues long: COP9 signalosome complex subunit 5 (336 aa).

Residues 44-181 (VRISSVAMIK…IGAFRTIPEG (138 aa)) form the MPN domain. Residues His127, His129, and Asp140 each coordinate Zn(2+). The short motif at 127–140 (HSHPGYGCWLSGID) is the JAMM motif element.

It belongs to the peptidase M67A family. CSN5 subfamily. As to quaternary structure, component of the COP9 signalosome (CSN) complex.

It localises to the cytoplasm. The protein resides in the nucleus. Its function is as follows. Catalytic component of the COP9 signalosome (CSN) complex that acts as an regulator of the ubiquitin (Ubl) conjugation pathway by mediating the deneddylation of the cullin subunit of SCF-type E3 ubiquitin-protein ligase complexes. The CSN complex is involved in the regulation of the circadian clock through its control of the stability of the SCF(FWD-1) complex. The sequence is that of COP9 signalosome complex subunit 5 (csn-5) from Neurospora crassa (strain ATCC 24698 / 74-OR23-1A / CBS 708.71 / DSM 1257 / FGSC 987).